Here is a 758-residue protein sequence, read N- to C-terminus: 5-methyltetrahydropteroyltriglutamate--homocysteine methyltransferase (758 aa).

5-methyltetrahydropteroyltri-L-glutamate is bound by residues 17–20 (RELK) and Lys117. Residues 434–436 (IGS) and Glu487 each bind L-homocysteine. L-methionine is bound by residues 434-436 (IGS) and Glu487. Residues 518–519 (RC) and Trp564 contribute to the 5-methyltetrahydropteroyltri-L-glutamate site. Asp602 provides a ligand contact to L-homocysteine. L-methionine is bound at residue Asp602. Glu608 contacts 5-methyltetrahydropteroyltri-L-glutamate. His644, Cys646, and Glu668 together coordinate Zn(2+). The Proton donor role is filled by His697. Cys729 contributes to the Zn(2+) binding site.

It belongs to the vitamin-B12 independent methionine synthase family. It depends on Zn(2+) as a cofactor.

The enzyme catalyses 5-methyltetrahydropteroyltri-L-glutamate + L-homocysteine = tetrahydropteroyltri-L-glutamate + L-methionine. It participates in amino-acid biosynthesis; L-methionine biosynthesis via de novo pathway; L-methionine from L-homocysteine (MetE route): step 1/1. Catalyzes the transfer of a methyl group from 5-methyltetrahydrofolate to homocysteine resulting in methionine formation. This Yersinia pseudotuberculosis serotype I (strain IP32953) protein is 5-methyltetrahydropteroyltriglutamate--homocysteine methyltransferase.